The following is an 88-amino-acid chain: Small ribosomal subunit protein bS20 (88 aa).

The segment at 1–27 is disordered; that stretch reads MANSKSAKKRALQSEKRRQHNASRRSM.

The protein belongs to the bacterial ribosomal protein bS20 family.

Functionally, binds directly to 16S ribosomal RNA. This is Small ribosomal subunit protein bS20 from Shewanella baltica (strain OS223).